The primary structure comprises 98 residues: Gas vesicle protein A (98 aa).

The protein belongs to the gas vesicle GvpA family. As to quaternary structure, the gas vesicle shell is 2 nm thick and consists of a single layer of this protein. It forms helical ribs nearly perpendicular to the long axis of the vesicle.

The protein resides in the gas vesicle shell. Gas vesicles are hollow, gas filled proteinaceous nanostructures found in some microorganisms. During planktonic growth they allow positioning of the organism at a favorable depth for light or nutrient acquisition. GvpA forms the protein shell. The chain is Gas vesicle protein A from Koribacter versatilis (strain Ellin345).